The sequence spans 380 residues: Capsular polysaccharide biosynthesis glycosyltransferase CapM (380 aa).

Belongs to the glycosyltransferase group 1 family. Glycosyltransferase 4 subfamily.

The protein operates within capsule biogenesis; capsule polysaccharide biosynthesis. Functionally, required for the biosynthesis of type 1 capsular polysaccharide. The polypeptide is Capsular polysaccharide biosynthesis glycosyltransferase CapM (capM) (Staphylococcus aureus).